The following is a 372-amino-acid chain: N-methyl-L-tryptophan oxidase (372 aa).

Position 4–34 (4–34) interacts with FAD; the sequence is DLIIIGSGSVGAAAGYYATRAGLNVLMTDAH. An S-8alpha-FAD cysteine modification is found at Cys-308.

This sequence belongs to the MSOX/MTOX family. MTOX subfamily. As to quaternary structure, monomer. FAD is required as a cofactor.

The enzyme catalyses N(alpha)-methyl-L-tryptophan + O2 + H2O = L-tryptophan + formaldehyde + H2O2. Its function is as follows. Catalyzes the oxidative demethylation of N-methyl-L-tryptophan. The chain is N-methyl-L-tryptophan oxidase from Shigella boydii serotype 18 (strain CDC 3083-94 / BS512).